The chain runs to 497 residues: ADP-dependent glucokinase (497 aa).

The first 22 residues, 1–22, serve as a signal peptide directing secretion; sequence MALWRGSAYAGFLALAVGCVFL. An ADPK domain is found at 52–497; sequence SPEGRLAAAW…LFYSEVHPHL (446 aa). Mg(2+) is bound by residues Glu297, Glu328, and Asp481. Asp481 acts as the Proton acceptor in catalysis.

This sequence belongs to the ADP-dependent glucokinase family. In terms of assembly, monomer. The cofactor is Mg(2+).

It is found in the secreted. The catalysed reaction is D-glucose + ADP = D-glucose 6-phosphate + AMP + H(+). It participates in carbohydrate degradation; glycolysis. In terms of biological role, catalyzes the phosphorylation of D-glucose to D-glucose 6-phosphate using ADP as the phosphate donor. GDP and CDP can replace ADP, but with reduced efficiency. The chain is ADP-dependent glucokinase (ADPGK) from Bos taurus (Bovine).